A 274-amino-acid polypeptide reads, in one-letter code: 2,3,4,5-tetrahydropyridine-2,6-dicarboxylate N-succinyltransferase (274 aa).

Residues Arg104 and Asp141 each coordinate substrate.

This sequence belongs to the transferase hexapeptide repeat family. Homotrimer.

Its subcellular location is the cytoplasm. It carries out the reaction (S)-2,3,4,5-tetrahydrodipicolinate + succinyl-CoA + H2O = (S)-2-succinylamino-6-oxoheptanedioate + CoA. Its pathway is amino-acid biosynthesis; L-lysine biosynthesis via DAP pathway; LL-2,6-diaminopimelate from (S)-tetrahydrodipicolinate (succinylase route): step 1/3. The chain is 2,3,4,5-tetrahydropyridine-2,6-dicarboxylate N-succinyltransferase from Shigella boydii serotype 4 (strain Sb227).